The following is a 1193-amino-acid chain: DNA-directed RNA polymerase subunit beta (1193 aa).

The segment covering 1152–1161 (IEMRDLEDDE) has biased composition (acidic residues). The tract at residues 1152–1193 (IEMRDLEDDEETKKADGLALSNDEDAADLAPVDLERDAVTKE) is disordered. The span at 1184 to 1193 (DLERDAVTKE) shows a compositional bias: basic and acidic residues.

It belongs to the RNA polymerase beta chain family. As to quaternary structure, the RNAP catalytic core consists of 2 alpha, 1 beta, 1 beta' and 1 omega subunit. When a sigma factor is associated with the core the holoenzyme is formed, which can initiate transcription.

It catalyses the reaction RNA(n) + a ribonucleoside 5'-triphosphate = RNA(n+1) + diphosphate. Its function is as follows. DNA-dependent RNA polymerase catalyzes the transcription of DNA into RNA using the four ribonucleoside triphosphates as substrates. This is DNA-directed RNA polymerase subunit beta from Bacillus pumilus (strain SAFR-032).